The following is a 281-amino-acid chain: Gas vesicle protein L1 (281 aa).

This sequence belongs to the gas vesicle GvpF/GvpL family. As to quaternary structure, may form oligomers. GvpF to GvpM interact with each other in vitro, and may form multi-subunit complex(es). Interacts with GvpC1, GvpN1 and GvpO1.

The protein localises to the gas vesicle. It localises to the cytoplasm. In terms of biological role, proteins GvpF to GvpM might be involved in nucleating gas vesicle formation. A minor component of the gas vesicle. This the only minor gas vesicle protein that binds all the others (including GvpC1, GvpN1 and GvpO1, but not GvpA1), suggesting it might be able to assemble them. Gas vesicles are hollow, gas filled proteinaceous nanostructures found in several microbial planktonic microorganisms. They allow positioning of halobacteria at the optimal depth for growth in the poorly aerated, shallow brine pools of their habitat. Functionally, expression of a 9.5 kb p-vac DNA fragment containing 2 divergently transcribed regions (gvpD-gvpE-gvpF-gvpG-gvpH-gvpI-gvpJ-gvpK-gvpL-gvpM and gvpA-gvpC-gvpN-gvpO) allows H.volcanii to produce gas vesicles. A minimal gas vesicle can be made in H.volcanii by gvpA1-gvpO1 plus gvpF1-gvpG1-gvpJ1-gvpK1-gvpL1-gvpM1; lack of enough GvpJ1 prevents their formation. A similar region restores gas vesicle production in H.halobium without the p-vac locus, but it still has the c-vac locus. The polypeptide is Gas vesicle protein L1 (gvpL11) (Halobacterium salinarum (strain ATCC 700922 / JCM 11081 / NRC-1) (Halobacterium halobium)).